Reading from the N-terminus, the 448-residue chain is Trigger factor (448 aa).

The region spanning Gly-172–Pro-257 is the PPIase FKBP-type domain.

It belongs to the FKBP-type PPIase family. Tig subfamily.

The protein localises to the cytoplasm. It catalyses the reaction [protein]-peptidylproline (omega=180) = [protein]-peptidylproline (omega=0). Functionally, involved in protein export. Acts as a chaperone by maintaining the newly synthesized protein in an open conformation. Functions as a peptidyl-prolyl cis-trans isomerase. The sequence is that of Trigger factor from Paraburkholderia xenovorans (strain LB400).